Consider the following 571-residue polypeptide: MEDYSNLSLKSIPKRTCRIIFRTATILGICTLIVLCSSILHEIIHLDVSSGLMDSDDSQQGIIQPIIESLKSLIALANQILYNVAIIIPLKIDSIETVIYSALKDMHTGSMSNTNCTPGNLLLHDAAYINGLNKFLVLKSYNGTPKYGPLLNIPSFIPSATSPNGCTRIPSFSLIKTHWCYTHNVILGDCLDFTTSNQYLAMGIIQQSAAAFPIFRTMKTIYLSDGINRKSCSVTAIPGGCVLYCYVATRSEKEDYATTDLAELRLAFYYYNDTFIERVISLPNTTGQWATINPAVGSGIYHLGFILFPVYGGLIKGTPSYNKQSSRYFIPKHPNITCAGKSSEQAAAARSSYVIRYHSNRLLQSAVLICPLSDMHTARCNLVMFNNSQVMMGAEGRLYVIDNNLYYYQRSSSWWSASLFYRINTDFSKGIPPIIEAQWVPSYQVPRPGVMPCNATSFCPANCITGVYADVWPLNDPEPTSQNALNPNYRFAGAFLRNESNRTNPTFYTASASALLNTTGFNNTNHKAAYTSSTCFKNTGTQKIYCLIIIEMGSSLLGEFQIIPFLRELIP.

Topologically, residues 1-25 (MEDYSNLSLKSIPKRTCRIIFRTAT) are intravirion. The chain crosses the membrane as a helical span at residues 26 to 46 (ILGICTLIVLCSSILHEIIHL). The Virion surface portion of the chain corresponds to 47 to 571 (DVSSGLMDSD…IIPFLRELIP (525 aa)). Cystine bridges form between Cys-166–Cys-190, Cys-180–Cys-241, and Cys-232–Cys-245. The involved in neuraminidase activity stretch occupies residues 228-233 (NRKSCS). N-linked (GlcNAc...) asparagine; by host glycosylation is found at Asn-272, Asn-284, and Asn-335. 3 cysteine pairs are disulfide-bonded: Cys-338-Cys-459, Cys-370-Cys-380, and Cys-453-Cys-463. 6 N-linked (GlcNAc...) asparagine; by host glycosylation sites follow: Asn-386, Asn-454, Asn-498, Asn-501, Asn-517, and Asn-522. Cys-535 and Cys-546 are joined by a disulfide.

The protein belongs to the paramyxoviruses hemagglutinin-neuraminidase family. Homotetramer; composed of disulfide-linked homodimers. Interacts with F protein trimer.

It is found in the virion membrane. It localises to the host cell membrane. It catalyses the reaction Hydrolysis of alpha-(2-&gt;3)-, alpha-(2-&gt;6)-, alpha-(2-&gt;8)- glycosidic linkages of terminal sialic acid residues in oligosaccharides, glycoproteins, glycolipids, colominic acid and synthetic substrates.. Its function is as follows. Attaches the virus to sialic acid-containing cell receptors and thereby initiating infection. Binding of HN protein to the receptor induces a conformational change that allows the F protein to trigger virion/cell membranes fusion. Functionally, neuraminidase activity ensures the efficient spread of the virus by dissociating the mature virions from the neuraminic acid containing glycoproteins. The chain is Hemagglutinin-neuraminidase (HN) from Homo sapiens (Human).